The chain runs to 120 residues: Dihydroneopterin aldolase (120 aa).

Glu20 and Met114 together coordinate substrate.

It belongs to the archaeal dihydroneopterin aldolase family. As to quaternary structure, homotetramer.

It carries out the reaction 7,8-dihydroneopterin = 6-hydroxymethyl-7,8-dihydropterin + glycolaldehyde. In terms of biological role, catalyzes the conversion of 7,8-dihydroneopterin (H2Neo) to 6-hydroxymethyl-7,8-dihydropterin (6-HMD). The chain is Dihydroneopterin aldolase from Picrophilus torridus (strain ATCC 700027 / DSM 9790 / JCM 10055 / NBRC 100828 / KAW 2/3).